The chain runs to 544 residues: DNA mismatch repair protein MutL (544 aa).

This sequence belongs to the DNA mismatch repair MutL/HexB family.

This protein is involved in the repair of mismatches in DNA. It is required for dam-dependent methyl-directed DNA mismatch repair. May act as a 'molecular matchmaker', a protein that promotes the formation of a stable complex between two or more DNA-binding proteins in an ATP-dependent manner without itself being part of a final effector complex. This chain is DNA mismatch repair protein MutL, found in Thermodesulfovibrio yellowstonii (strain ATCC 51303 / DSM 11347 / YP87).